Here is a 490-residue protein sequence, read N- to C-terminus: Protein dead ringer homolog (490 aa).

The segment covering 1–33 (MVEDQRRQLMEEEDEERRLILEEQRRRMMRADR) has biased composition (basic and acidic residues). Disordered regions lie at residues 1–77 (MVED…AHID) and 106–135 (ITQSPPLTNGSNHDNDHDPYLSHRAAHGGS). Residues 34-50 (DEEEEEEEEEEEEEREE) are compositionally biased toward acidic residues. The span at 51–76 (DDGRRSEDEMREDEPPGRRETSHAHI) shows a compositional bias: basic and acidic residues. Polar residues predominate over residues 106–117 (ITQSPPLTNGSN). Residues 202–294 (DSKRKEFLDD…YLYPYECEKK (93 aa)) form the ARID domain. Residues 298-369 (SPSELQSAID…PPRLSPSTSP (72 aa)) form a disordered region. Basic residues predominate over residues 316 to 325 (PSYHSPHMHP). Residues 389-479 (AAMLAELAER…GVLYPRGGTR (91 aa)) form the REKLES domain.

Its subcellular location is the nucleus. In terms of biological role, transcription factor involved in skeletogenesis and oral ectoderm patterning. This is Protein dead ringer homolog (dri) from Strongylocentrotus purpuratus (Purple sea urchin).